Reading from the N-terminus, the 316-residue chain is Transaldolase (316 aa).

Lysine 132 serves as the catalytic Schiff-base intermediate with substrate.

This sequence belongs to the transaldolase family. Type 1 subfamily. Homodimer.

The protein resides in the cytoplasm. The enzyme catalyses D-sedoheptulose 7-phosphate + D-glyceraldehyde 3-phosphate = D-erythrose 4-phosphate + beta-D-fructose 6-phosphate. It participates in carbohydrate degradation; pentose phosphate pathway; D-glyceraldehyde 3-phosphate and beta-D-fructose 6-phosphate from D-ribose 5-phosphate and D-xylulose 5-phosphate (non-oxidative stage): step 2/3. In terms of biological role, transaldolase is important for the balance of metabolites in the pentose-phosphate pathway. The protein is Transaldolase of Methylobacillus flagellatus (strain ATCC 51484 / DSM 6875 / VKM B-1610 / KT).